Here is an 880-residue protein sequence, read N- to C-terminus: Leucine--tRNA ligase (880 aa).

The 'HIGH' region motif lies at 46–56; that stretch reads PYPSGALHMGH. The 'KMSKS' region motif lies at 638-642; sequence KMSKS. Lys-641 lines the ATP pocket.

Belongs to the class-I aminoacyl-tRNA synthetase family.

The protein localises to the cytoplasm. The catalysed reaction is tRNA(Leu) + L-leucine + ATP = L-leucyl-tRNA(Leu) + AMP + diphosphate. The protein is Leucine--tRNA ligase of Xanthomonas euvesicatoria pv. vesicatoria (strain 85-10) (Xanthomonas campestris pv. vesicatoria).